Here is a 145-residue protein sequence, read N- to C-terminus: L-alanine exporter AlaE (145 aa).

The next 4 membrane-spanning stretches (helical) occupy residues 16-36, 42-62, 86-106, and 111-131; these read FALV…LSGM, LSSR…YGLY, LFAY…VIGA, and ILTA…TYGY.

The protein belongs to the AlaE exporter family.

It localises to the cell inner membrane. Functionally, exports L-alanine. This Pectobacterium parmentieri (strain WPP163) (Pectobacterium wasabiae (strain WPP163)) protein is L-alanine exporter AlaE.